The chain runs to 648 residues: Forkhead box protein N1 (648 aa).

The tract at residues 1-105 (MVSLPPPQSD…SDKYPGFGFE (105 aa)) is disordered. A compositionally biased stretch (pro residues) spans 58 to 67 (ERTPSLPPHS). The segment at residues 271 to 367 (KPIYSYSILI…EELQKWKRKD (97 aa)) is a DNA-binding region (fork-head). Disordered stretches follow at residues 392-445 (LGSP…LLMG), 458-508 (LSPG…LLAE), and 623-648 (LEPTPPTAPAGPSVYLSPSSKPVALA). Residues 462–473 (LAPPGPPQPLFP) are compositionally biased toward pro residues.

As to expression, expressed in thymus.

Its subcellular location is the nucleus. Its function is as follows. Transcriptional regulator which regulates the development, differentiation, and function of thymic epithelial cells (TECs) both in the prenatal and postnatal thymus. Acts as a master regulator of the TECs lineage development and is required from the onset of differentiation in progenitor TECs in the developing fetus to the final differentiation steps through which TECs mature to acquire their full functionality. Regulates, either directly or indirectly the expression of a variety of genes that mediate diverse aspects of thymus development and function, including MHC Class II, DLL4, CCL25, CTSL, CD40 and PAX1. Regulates the differentiation of the immature TECs into functional cortical TECs (cTECs) and medullary TECs (mTECs). Essential for maintenance of mTECs population in the postnatal thymus. Involved in the morphogenesis and maintenance of the three-dimensional thymic microstructure which is necessary for a fully functional thymus. Plays an important role in the maintenance of hematopoiesis and particularly T lineage progenitors within the bone marrow niche with age. Essential for the vascularization of the thymus anlage. Promotes the terminal differentiation of epithelial cells in the epidermis and hair follicles, partly by negatively regulating the activity of protein kinase C. Plays a crucial role in the early prenatal stages of T-cell ontogeny. This Homo sapiens (Human) protein is Forkhead box protein N1 (FOXN1).